The primary structure comprises 81 residues: Probable small nuclear ribonucleoprotein G (81 aa).

One can recognise a Sm domain in the interval 5-76; that stretch reads GQPPALKKYM…VVTVEALEPV (72 aa).

This sequence belongs to the snRNP Sm proteins family.

It is found in the nucleus. In terms of biological role, probable common Sm protein, is found in U1 and U2 snRNPs and may be part of the spliceosome. The polypeptide is Probable small nuclear ribonucleoprotein G (C29) (Medicago sativa (Alfalfa)).